We begin with the raw amino-acid sequence, 348 residues long: Trace amine-associated receptor 9 (348 aa).

The Extracellular portion of the chain corresponds to Met1–Ser33. N-linked (GlcNAc...) asparagine glycans are attached at residues Asn4 and Asn19. 2 disulfides stabilise this stretch: Cys22–Cys186 and Cys105–Cys190. The chain crosses the membrane as a helical span at residues Ile34–Leu58. Residues His59–Asn68 are Cytoplasmic-facing. The chain crosses the membrane as a helical span at residues Phe69–Thr90. At Val91–Cys105 the chain is on the extracellular side. The helical transmembrane segment at Lys106–Val128 threads the bilayer. Residues Asp112 and Thr113 each coordinate spermidine. The Cytoplasmic segment spans residues Asp129–Val148. The chain crosses the membrane as a helical span at residues Ser149–Thr170. The Extracellular portion of the chain corresponds to Gly171–Gln196. An extracellular Loop 2 (ECL2) region spans residues Glu174–Val187. The helical transmembrane segment at Asn197–Ser218 threads the bilayer. Over Lys219–Ala256 the chain is Cytoplasmic. The chain crosses the membrane as a helical span at residues Ala257 to Ile280. Residues Asp281 to Tyr293 are Extracellular-facing. A helical membrane pass occupies residues Glu294–Phe314. Residues Tyr315–Asp348 lie on the Cytoplasmic side of the membrane.

Belongs to the G-protein coupled receptor 1 family.

The protein localises to the cell membrane. Functionally, olfactory receptor specific for trace amines, such as N,N-dimethylcyclohexylamine (DMCHA) and beta-phenylethylamine (beta-PEA). In contrast to mouse and rat orthologs, not activated by triethylamine, cadaverine (CAD) or spermidine. Trace amine compounds are enriched in animal body fluids and act on trace amine-associated receptors (TAARs) to elicit both intraspecific and interspecific innate behaviors. Trace amine-binding causes a conformation change that triggers signaling via G(s)-class of G alpha proteins (GNAL or GNAS). In mature olfactory sensory neurons, TAAR9 is coupled with GNAL/G(olf)G alpha protein and mediates activation of adenylate cyclase activity to activate cAMP signaling and eventually transmit odorant signals to achieve membrane depolarization. In immature olfactory sensory neurons, TAAR9 is coupled with GNAS/G(s) G alpha proteins. The sequence is that of Trace amine-associated receptor 9 from Homo sapiens (Human).